The following is a 228-amino-acid chain: Nucleolar protein 12 (228 aa).

Residues 1–22 (MGKSDRLQQGSKGKGGGKRKHG) form a disordered region. Residues 40-103 (FHKRKLERRR…AITATTECVQ (64 aa)) adopt a coiled-coil conformation. Over residues 126-145 (LLEPAQRDGGDGEERERTEA) the composition is skewed to basic and acidic residues. The disordered stretch occupies residues 126–228 (LLEPAQRDGG…QTGRNERSQD (103 aa)). Residues 158 to 170 (KIQSLTASLNSLV) are compositionally biased toward polar residues. The segment covering 171 to 180 (KQKKRRKQKR) has biased composition (basic residues). A compositionally biased stretch (basic and acidic residues) spans 181–195 (RQEAKQRSHQSDRKS). Residues 204-220 (NKQKQGKSTKRQRRRQT) show a composition bias toward basic residues.

It belongs to the RRP17 family.

It localises to the nucleus. The protein localises to the nucleolus. Its function is as follows. May bind to rRNA. The protein is Nucleolar protein 12 (nol12) of Danio rerio (Zebrafish).